The chain runs to 427 residues: Glutamate-1-semialdehyde 2,1-aminomutase 2 (427 aa).

Lys267 is modified (N6-(pyridoxal phosphate)lysine).

Belongs to the class-III pyridoxal-phosphate-dependent aminotransferase family. HemL subfamily. Homodimer. It depends on pyridoxal 5'-phosphate as a cofactor.

Its subcellular location is the cytoplasm. It catalyses the reaction (S)-4-amino-5-oxopentanoate = 5-aminolevulinate. Its pathway is porphyrin-containing compound metabolism; protoporphyrin-IX biosynthesis; 5-aminolevulinate from L-glutamyl-tRNA(Glu): step 2/2. The protein is Glutamate-1-semialdehyde 2,1-aminomutase 2 of Staphylococcus haemolyticus (strain JCSC1435).